We begin with the raw amino-acid sequence, 899 residues long: Receptor-like protein kinase At3g21340 (899 aa).

The N-terminal stretch at 1-27 (MEYHPQAIRLCALIFISFYALLHLVEA) is a signal peptide. The Extracellular segment spans residues 28–522 (QDQKGFISLD…GAKKMNVVIP (495 aa)). N-linked (GlcNAc...) asparagine glycosylation is found at N100, N146, N185, N240, N266, N420, N436, N449, N468, and N475. LRR repeat units follow at residues 415 to 438 (IVTS…QNLT), 439 to 461 (HLQE…LADI), and 463 to 485 (SLLV…LLQK). A helical membrane pass occupies residues 523–543 (IVASVAFVVVLGSALAFFFIF). The Cytoplasmic segment spans residues 544–899 (KKKKTSNSQD…FDIGATPDAR (356 aa)). A Phosphothreonine modification is found at T583. Residues 592 to 865 (NNFERVLGKG…QVVIELNECL (274 aa)) enclose the Protein kinase domain. ATP contacts are provided by residues 598–606 (LGKGGFGMV) and K620. Phosphotyrosine is present on Y665. Catalysis depends on D717, which acts as the Proton acceptor. Residue S751 is modified to Phosphoserine. 2 positions are modified to phosphothreonine: T752 and T757. Phosphotyrosine is present on Y765.

This sequence belongs to the protein kinase superfamily. Ser/Thr protein kinase family. Autophosphorylated on Tyr and Thr residues.

The protein resides in the cell membrane. It carries out the reaction L-seryl-[protein] + ATP = O-phospho-L-seryl-[protein] + ADP + H(+). The enzyme catalyses L-threonyl-[protein] + ATP = O-phospho-L-threonyl-[protein] + ADP + H(+). It catalyses the reaction L-tyrosyl-[protein] + ATP = O-phospho-L-tyrosyl-[protein] + ADP + H(+). Probable receptor with a dual specificity kinase activity acting on both serine/threonine- and tyrosine-containing substrates. This chain is Receptor-like protein kinase At3g21340, found in Arabidopsis thaliana (Mouse-ear cress).